The sequence spans 360 residues: Photosystem II protein D1 (360 aa).

The next 3 membrane-spanning stretches (helical) occupy residues 32–49 (YLGW…SATF), 121–136 (HFFI…EWEL), and 145–159 (WIFV…AASA). H121 is a chlorophyll a binding site. Y129 is a binding site for pheophytin a. The [CaMn4O5] cluster site is built by D173 and E192. Residues 200–221 (LHMFGVAAVFGGSLFSAMHGSL) traverse the membrane as a helical segment. H201 provides a ligand contact to chlorophyll a. Residues H218 and 267–268 (SF) each bind a quinone. H218 is a Fe cation binding site. H275 is a Fe cation binding site. Residues 277–291 (FLGAWPVVGIWLTAM) traverse the membrane as a helical segment. The [CaMn4O5] cluster site is built by H335, E336, D345, and A347. Residues 348 to 360 (CANCLLSLWPMVG) constitute a propeptide that is removed on maturation.

It belongs to the reaction center PufL/M/PsbA/D family. As to quaternary structure, PSII is composed of 1 copy each of membrane proteins PsbA, PsbB, PsbC, PsbD, PsbE, PsbF, PsbH, PsbI, PsbJ, PsbK, PsbL, PsbM, PsbT, PsbX, PsbY, PsbZ, Psb30/Ycf12, at least 3 peripheral proteins of the oxygen-evolving complex and a large number of cofactors. It forms dimeric complexes. The cofactor is The D1/D2 heterodimer binds P680, chlorophylls that are the primary electron donor of PSII, and subsequent electron acceptors. It shares a non-heme iron and each subunit binds pheophytin, quinone, additional chlorophylls, carotenoids and lipids. D1 provides most of the ligands for the Mn4-Ca-O5 cluster of the oxygen-evolving complex (OEC). There is also a Cl(-1) ion associated with D1 and D2, which is required for oxygen evolution. The PSII complex binds additional chlorophylls, carotenoids and specific lipids.. Post-translationally, tyr-164 forms a radical intermediate that is referred to as redox-active TyrZ, YZ or Y-Z. In terms of processing, C-terminally processed by CtpA; processing is essential to allow assembly of the oxygen-evolving complex and thus photosynthetic growth.

The protein localises to the plastid. It is found in the chloroplast thylakoid membrane. The enzyme catalyses 2 a plastoquinone + 4 hnu + 2 H2O = 2 a plastoquinol + O2. Photosystem II (PSII) is a light-driven water:plastoquinone oxidoreductase that uses light energy to abstract electrons from H(2)O, generating O(2) and a proton gradient subsequently used for ATP formation. It consists of a core antenna complex that captures photons, and an electron transfer chain that converts photonic excitation into a charge separation. The D1/D2 (PsbA/PsbD) reaction center heterodimer binds P680, the primary electron donor of PSII as well as several subsequent electron acceptors. This chain is Photosystem II protein D1, found in Karenia mikimotoi (Red tide dinoflagellate).